The primary structure comprises 126 residues: Aspartate 1-decarboxylase (126 aa).

Serine 25 acts as the Schiff-base intermediate with substrate; via pyruvic acid in catalysis. Serine 25 carries the post-translational modification Pyruvic acid (Ser). Threonine 57 is a substrate binding site. Tyrosine 58 acts as the Proton donor in catalysis. 73–75 (GAA) contributes to the substrate binding site.

The protein belongs to the PanD family. In terms of assembly, heterooctamer of four alpha and four beta subunits. Pyruvate serves as cofactor. Post-translationally, is synthesized initially as an inactive proenzyme, which is activated by self-cleavage at a specific serine bond to produce a beta-subunit with a hydroxyl group at its C-terminus and an alpha-subunit with a pyruvoyl group at its N-terminus.

It localises to the cytoplasm. The catalysed reaction is L-aspartate + H(+) = beta-alanine + CO2. It participates in cofactor biosynthesis; (R)-pantothenate biosynthesis; beta-alanine from L-aspartate: step 1/1. Its function is as follows. Catalyzes the pyruvoyl-dependent decarboxylation of aspartate to produce beta-alanine. The protein is Aspartate 1-decarboxylase of Sodalis glossinidius (strain morsitans).